We begin with the raw amino-acid sequence, 217 residues long: Trichothecene biosynthesis transcription regulator TRI6 (217 aa).

A C2H2-type zinc finger spans residues 185 to 215; it reads VRCPWHDQEGQQCLRVFSRVDNMRDHYRRIH.

The protein resides in the nucleus. In terms of biological role, transcriptional activator of part of the core trichothecene biosynthesis cluster. In Fusarium sporotrichioides, this protein is Trichothecene biosynthesis transcription regulator TRI6.